Consider the following 82-residue polypeptide: Putative membrane protein insertion efficiency factor (82 aa).

Belongs to the UPF0161 family.

The protein localises to the cell inner membrane. In terms of biological role, could be involved in insertion of integral membrane proteins into the membrane. This Synechococcus elongatus (strain ATCC 33912 / PCC 7942 / FACHB-805) (Anacystis nidulans R2) protein is Putative membrane protein insertion efficiency factor.